Reading from the N-terminus, the 609-residue chain is UvrABC system protein C (609 aa).

One can recognise a GIY-YIG domain in the interval 16–94; it reads SSAGVYRMYD…IKQYMPKYNV (79 aa). The UVR domain maps to 203–238; sequence QQVISALVDKMELAAERQAYEQAARFRDQIMALRKV.

It belongs to the UvrC family. As to quaternary structure, interacts with UvrB in an incision complex.

The protein localises to the cytoplasm. Its function is as follows. The UvrABC repair system catalyzes the recognition and processing of DNA lesions. UvrC both incises the 5' and 3' sides of the lesion. The N-terminal half is responsible for the 3' incision and the C-terminal half is responsible for the 5' incision. The sequence is that of UvrABC system protein C from Shewanella baltica (strain OS155 / ATCC BAA-1091).